A 454-amino-acid chain; its full sequence is Bifunctional protein GlmU (454 aa).

The interval 1–225 is pyrophosphorylase; it reads MNIVILAAGM…IWETLGVNSK (225 aa). Residues 6–9, K20, Q71, 76–77, 98–100, G135, E150, N165, and N223 each bind UDP-N-acetyl-alpha-D-glucosamine; these read LAAG, GT, and YGD. Mg(2+) is bound at residue D100. N223 is a binding site for Mg(2+). Residues 226–246 form a linker region; that stretch reads LQLAEVERIHQGNQARRLLEA. The N-acetyltransferase stretch occupies residues 247 to 454; that stretch reads GVTLLDPARI…WQRPVKQPKK (208 aa). Residues R329 and K347 each contribute to the UDP-N-acetyl-alpha-D-glucosamine site. The Proton acceptor role is filled by H359. The UDP-N-acetyl-alpha-D-glucosamine site is built by Y362 and N373. Acetyl-CoA contacts are provided by residues A376, 382–383, S401, A419, and R436; that span reads NY.

In the N-terminal section; belongs to the N-acetylglucosamine-1-phosphate uridyltransferase family. It in the C-terminal section; belongs to the transferase hexapeptide repeat family. As to quaternary structure, homotrimer. Mg(2+) serves as cofactor.

Its subcellular location is the cytoplasm. The catalysed reaction is alpha-D-glucosamine 1-phosphate + acetyl-CoA = N-acetyl-alpha-D-glucosamine 1-phosphate + CoA + H(+). It catalyses the reaction N-acetyl-alpha-D-glucosamine 1-phosphate + UTP + H(+) = UDP-N-acetyl-alpha-D-glucosamine + diphosphate. It functions in the pathway nucleotide-sugar biosynthesis; UDP-N-acetyl-alpha-D-glucosamine biosynthesis; N-acetyl-alpha-D-glucosamine 1-phosphate from alpha-D-glucosamine 6-phosphate (route II): step 2/2. The protein operates within nucleotide-sugar biosynthesis; UDP-N-acetyl-alpha-D-glucosamine biosynthesis; UDP-N-acetyl-alpha-D-glucosamine from N-acetyl-alpha-D-glucosamine 1-phosphate: step 1/1. Its pathway is bacterial outer membrane biogenesis; LPS lipid A biosynthesis. Functionally, catalyzes the last two sequential reactions in the de novo biosynthetic pathway for UDP-N-acetylglucosamine (UDP-GlcNAc). The C-terminal domain catalyzes the transfer of acetyl group from acetyl coenzyme A to glucosamine-1-phosphate (GlcN-1-P) to produce N-acetylglucosamine-1-phosphate (GlcNAc-1-P), which is converted into UDP-GlcNAc by the transfer of uridine 5-monophosphate (from uridine 5-triphosphate), a reaction catalyzed by the N-terminal domain. This Cupriavidus necator (strain ATCC 17699 / DSM 428 / KCTC 22496 / NCIMB 10442 / H16 / Stanier 337) (Ralstonia eutropha) protein is Bifunctional protein GlmU.